A 749-amino-acid chain; its full sequence is Protein phosphatase 1E (749 aa).

Residues 21 to 128 (EFRGPCGGGE…PPLPPLPRPL (108 aa)) are disordered. Tandem repeats lie at residues 31–32 (PE), 33–34 (PE), and 35–36 (PE). The segment at 31-44 (PEPEPESEPEPEPE) is 7 X 2 AA tandem repeats of P-E. Positions 31 to 45 (PEPEPESEPEPEPEA) are enriched in acidic residues. One copy of the 4; approximate repeat lies at 37-38 (SE). Tandem repeats lie at residues 39–40 (PE), 41–42 (PE), and 43–44 (PE). Positions 46–55 (ELVAAEAAEA) are enriched in low complexity. Residues 69–102 (ATEEGEQDQDPEPEDEAVEEETATEGEEEEEEEA) are compositionally biased toward acidic residues. The span at 110-126 (VPPPPQPQLPPLPPLPR) shows a compositional bias: pro residues. Positions 224-485 (QIYYETSIHA…DNITVIVVFL (262 aa)) constitute a PPM-type phosphatase domain. Residues aspartate 270, glycine 271, aspartate 432, and aspartate 476 each contribute to the Mn(2+) site. The segment at 495–537 (SEESEWTENSFQGGQEDGGDDKETHGECKRPWPQHQCSAPADL) is disordered. Over residues 515–524 (DKETHGECKR) the composition is skewed to basic and acidic residues. Phosphoserine occurs at positions 532 and 545. Residues 608 to 627 (VKSSLPERSGAGEPRVSFNL) form a disordered region.

The protein belongs to the PP2C family. Heterotrimer. Interacts with PAX1 and ARHGEF6 (or ARHGEF7). It depends on Mg(2+) as a cofactor. Mn(2+) serves as cofactor.

Its subcellular location is the nucleus. The protein resides in the cytoplasm. It carries out the reaction O-phospho-L-seryl-[protein] + H2O = L-seryl-[protein] + phosphate. The catalysed reaction is O-phospho-L-threonyl-[protein] + H2O = L-threonyl-[protein] + phosphate. In terms of biological role, protein phosphatase that inactivates multifunctional CaM kinases such as CAMK4 and CAMK2. Dephosphorylates and inactivates PAK. May play a role in the inhibition of actin fiber stress breakdown and in morphological changes driven by TNK2/CDC42. Dephosphorylates PRKAA2. This is Protein phosphatase 1E (Ppm1e) from Mus musculus (Mouse).